We begin with the raw amino-acid sequence, 59 residues long: Large ribosomal subunit protein uL30 (59 aa).

Belongs to the universal ribosomal protein uL30 family. As to quaternary structure, part of the 50S ribosomal subunit.

In Erwinia tasmaniensis (strain DSM 17950 / CFBP 7177 / CIP 109463 / NCPPB 4357 / Et1/99), this protein is Large ribosomal subunit protein uL30.